We begin with the raw amino-acid sequence, 499 residues long: Dipeptide and tripeptide permease A (499 aa).

Residues 1-34 are Cytoplasmic-facing; that stretch reads MSTANKKPAESVSMNAFKQPRSFYLIFSIELWER. A helical transmembrane segment spans residues 35–55; it reads FGFYGLQGIMAVYLVKQLGMS. Residues 56–59 are Periplasmic-facing; it reads EADS. Residues 60 to 80 form a helical membrane-spanning segment; the sequence is ITLFSSFSALVYGLVAIGGWL. Residues 81-89 lie on the Cytoplasmic side of the membrane; that stretch reads GDKVLGTKR. A helical transmembrane segment spans residues 90–110; it reads VIMLGTIVLAIGYALVAWSGH. D111 is a topological domain (periplasmic). A helical transmembrane segment spans residues 112–132; that stretch reads AAIVYFGMATIAVGNGLFKAN. Residues 133 to 153 lie on the Cytoplasmic side of the membrane; sequence PSALLSTCYEKDDPRLDGAFT. A helical transmembrane segment spans residues 154–174; the sequence is MYYMAINIGSFFSMLATPWLA. Over 175 to 178 the chain is Periplasmic; the sequence is EKFG. A helical transmembrane segment spans residues 179–199; it reads WSVAFSLSFVGMLITLVNFIF. Topologically, residues 200-217 are cytoplasmic; the sequence is CKKWVKDYGSKPDFAPLH. A helical transmembrane segment spans residues 218-238; it reads VGKLLATIVGIVVLVAIATWL. The Periplasmic segment spans residues 239–246; it reads LHNQGIAR. The chain crosses the membrane as a helical span at residues 247-267; sequence LVLGVVALGIVIIFAKEAFAM. Over 268 to 274 the chain is Cytoplasmic; sequence QGAARRK. Residues 275–295 traverse the membrane as a helical segment; that stretch reads MIVAFILMLEAIVFFVLYQQM. Residues 296-320 lie on the Periplasmic side of the membrane; the sequence is PTSLNFFAIRNVEHSILGIAFQPEQ. A helical membrane pass occupies residues 321-341; it reads FQALNPFWIMIGSPILAAIYN. Over 342–350 the chain is Cytoplasmic; the sequence is KMGDRLPMP. The chain crosses the membrane as a helical span at residues 351 to 371; it reads FKFTIGMLLCSGAFLVLPLGA. Residues 372-383 lie on the Periplasmic side of the membrane; it reads KFASEAGIVSVN. A helical membrane pass occupies residues 384–404; it reads WLILSYALQSIGELMISGLGL. Topologically, residues 405-414 are cytoplasmic; it reads AMVAQLVPQR. Residues 415-435 form a helical membrane-spanning segment; that stretch reads LMGFIMGSWFLTTAGAAMIAG. The Periplasmic segment spans residues 436-459; the sequence is KVANLMAVPENVSDPLQSLEVYGR. A helical membrane pass occupies residues 460-480; sequence VFMQIGIATGVIAVLMLLTAP. Residues 481–499 lie on the Cytoplasmic side of the membrane; it reads LLNRMTQEDKPKETDTAHA.

The protein belongs to the major facilitator superfamily. Proton-dependent oligopeptide transporter (POT/PTR) (TC 2.A.17) family. DtpA subfamily.

The protein localises to the cell inner membrane. Functionally, proton-dependent permease that transports di- and tripeptides. In Cronobacter turicensis (strain DSM 18703 / CCUG 55852 / LMG 23827 / z3032), this protein is Dipeptide and tripeptide permease A.